Reading from the N-terminus, the 287-residue chain is Homoserine kinase (287 aa).

Position 79–89 (79–89 (PLARGLGSSSS)) interacts with ATP.

This sequence belongs to the GHMP kinase family. Homoserine kinase subfamily.

It is found in the cytoplasm. The catalysed reaction is L-homoserine + ATP = O-phospho-L-homoserine + ADP + H(+). It participates in amino-acid biosynthesis; L-threonine biosynthesis; L-threonine from L-aspartate: step 4/5. In terms of biological role, catalyzes the ATP-dependent phosphorylation of L-homoserine to L-homoserine phosphate. This chain is Homoserine kinase, found in Enterococcus faecalis (strain ATCC 700802 / V583).